A 285-amino-acid chain; its full sequence is MKYIGAHVSAAGGLANAAIRAAEIDATAFALFTKNQRQWRAAPLTTQTIDEFKAACEKYHYTSAQILPHDSYLINLGHPVTEALEKSRDAFIDEMQRCEQLGLSLLNFHPGSHLMQISEEDCLARIAESINIALDKTQGVTAVIENTAGQGSNLGFKFEHLAAIIDGVEDKSRVGVCIDTCHAFAAGYDLRTPAECEKTFADFARIVGFKYLRGMHLNDAKSTFGSRVDRHHSLGEGNIGHDAFRWIMQDDRFDGIPLILETINPDIWAEEIAWLKAQQTEKAVA.

The Zn(2+) site is built by His69, His109, Glu145, Asp179, His182, His216, Asp229, His231, and Glu261.

This sequence belongs to the AP endonuclease 2 family. Requires Zn(2+) as cofactor.

The enzyme catalyses Endonucleolytic cleavage to 5'-phosphooligonucleotide end-products.. Functionally, endonuclease IV plays a role in DNA repair. It cleaves phosphodiester bonds at apurinic or apyrimidinic (AP) sites, generating a 3'-hydroxyl group and a 5'-terminal sugar phosphate. The protein is Probable endonuclease 4 of Shigella boydii serotype 4 (strain Sb227).